The following is a 595-amino-acid chain: Isoprene synthase, chloroplastic (595 aa).

A chloroplast-targeting transit peptide spans 1–37; that stretch reads MATELLCLHRPISLTHKLFRNPLPKVIQATPLTLKLR. Aspartate 345 contacts dimethylallyl diphosphate. Mg(2+)-binding residues include aspartate 345 and aspartate 349. Positions 345-349 match the DDXXD motif motif; the sequence is DDIYD. 3 residues coordinate dimethylallyl diphosphate: glutamate 423, arginine 486, and asparagine 489. The Mg(2+) site is built by asparagine 489, serine 493, and glutamate 497.

This sequence belongs to the terpene synthase family. Tpsb subfamily. Mg(2+) is required as a cofactor. It depends on Mn(2+) as a cofactor.

It localises to the plastid. It is found in the chloroplast. The catalysed reaction is dimethylallyl diphosphate = isoprene + diphosphate. Functionally, lyase that catalyzes the formation of isoprene from dimethylallyl diphosphate. In Populus tremuloides (Quaking aspen), this protein is Isoprene synthase, chloroplastic (ISPS).